A 287-amino-acid chain; its full sequence is Ret finger protein-like 4A (287 aa).

Residues 11–53 (CPVCLKDLEEAVQLKCGYACCLQCLNSLQKEPDGEGLLCRFCS) form an RING-type; degenerate zinc finger. In terms of domain architecture, B30.2/SPRY spans 78–276 (EPKLKSVLTM…LSICSVINPS (199 aa)).

In terms of assembly, interacts with PSMB1, UBE2A and CCNB1.

It localises to the cytoplasm. The protein resides in the nucleus. The polypeptide is Ret finger protein-like 4A (RFPL4A) (Homo sapiens (Human)).